The sequence spans 679 residues: DNA-directed RNA polymerase subunit beta' (679 aa).

4 residues coordinate Zn(2+): Cys-69, Cys-71, Cys-87, and Cys-90. The Mg(2+) site is built by Asp-489, Asp-491, and Asp-493.

It belongs to the RNA polymerase beta' chain family. RpoC1 subfamily. In terms of assembly, in plastids the minimal PEP RNA polymerase catalytic core is composed of four subunits: alpha, beta, beta', and beta''. When a (nuclear-encoded) sigma factor is associated with the core the holoenzyme is formed, which can initiate transcription. Mg(2+) serves as cofactor. Zn(2+) is required as a cofactor.

The protein localises to the plastid. Its subcellular location is the chloroplast. It catalyses the reaction RNA(n) + a ribonucleoside 5'-triphosphate = RNA(n+1) + diphosphate. In terms of biological role, DNA-dependent RNA polymerase catalyzes the transcription of DNA into RNA using the four ribonucleoside triphosphates as substrates. The protein is DNA-directed RNA polymerase subunit beta' of Oenothera argillicola (Appalachian evening primrose).